Here is a 207-residue protein sequence, read N- to C-terminus: Ribosomal RNA small subunit methyltransferase G (207 aa).

S-adenosyl-L-methionine contacts are provided by residues Gly-73, Leu-78, 124-125 (VE), and Arg-139.

This sequence belongs to the methyltransferase superfamily. RNA methyltransferase RsmG family.

It is found in the cytoplasm. It carries out the reaction guanosine(527) in 16S rRNA + S-adenosyl-L-methionine = N(7)-methylguanosine(527) in 16S rRNA + S-adenosyl-L-homocysteine. Functionally, specifically methylates the N7 position of guanine in position 527 of 16S rRNA. This Escherichia coli O17:K52:H18 (strain UMN026 / ExPEC) protein is Ribosomal RNA small subunit methyltransferase G.